The chain runs to 130 residues: Small ribosomal subunit protein bS16 (130 aa).

The interval 82-130 is disordered; the sequence is VLPKTERNNPKKAVPGKKAQDRAEEKAAKAAEASEAPADEAPAEEAAAE. The span at 99-110 shows a compositional bias: basic and acidic residues; it reads KAQDRAEEKAAK. The span at 118-130 shows a compositional bias: acidic residues; that stretch reads PADEAPAEEAAAE.

It belongs to the bacterial ribosomal protein bS16 family.

This is Small ribosomal subunit protein bS16 from Dinoroseobacter shibae (strain DSM 16493 / NCIMB 14021 / DFL 12).